The sequence spans 265 residues: Putative 2-amino-3,7-dideoxy-D-threo-hept-6-ulosonate synthase 2 (265 aa).

Residue aspartate 27 is the Proton acceptor of the active site. 1-deoxy-D-threo-hexo-2,5-diulose 6-phosphate is bound by residues 27–31 and 147–149; these read DHGVS and YPR. Tyrosine 147 functions as the Proton donor in the catalytic mechanism. Lysine 177 serves as the catalytic Schiff-base intermediate with substrate. Residues 202–203 and 230–231 each bind 1-deoxy-D-threo-hexo-2,5-diulose 6-phosphate; these read GG and GR.

It belongs to the DeoC/FbaB aldolase family. ADHS subfamily. As to quaternary structure, homodecamer.

The enzyme catalyses 1-deoxy-D-threo-hexo-2,5-diulose 6-phosphate + L-aspartate 4-semialdehyde = 2,3-dioxopropyl phosphate + 2-amino-2,3,7-trideoxy-D-lyxo-hept-6-ulosonate. Catalyzes a transaldol reaction between 6-deoxy-5-ketofructose 1-phosphate (DKFP) and L-aspartate semialdehyde (ASA) with an elimination of hydroxypyruvaldehyde phosphate to yield 2-amino-3,7-dideoxy-D-threo-hept-6-ulosonate (ADH). Plays a key role in an alternative pathway of the biosynthesis of 3-dehydroquinate (DHQ), which is involved in the canonical pathway for the biosynthesis of aromatic amino acids. In Archaeoglobus fulgidus (strain ATCC 49558 / DSM 4304 / JCM 9628 / NBRC 100126 / VC-16), this protein is Putative 2-amino-3,7-dideoxy-D-threo-hept-6-ulosonate synthase 2.